Reading from the N-terminus, the 748-residue chain is MASSPDPPSPLLVRLRESIPKAHRKLEIYFQSRASGGGECSVQPVGPSAPDTYEVKFLKKADKEKVLKKSEHEMLVHNKPVTIVLETTKKPVEDLRPRLPSLTQPVETPSSRPPSLTGSLDEALCDDIHPQDGLVSNSVDSVVQKIFLAVTAELNCDLLSKEQRASITTVCPHIIKSMEGSDGIKKVCGNFKDIEKIHHFLSEQLLEREQKRKGSEQKRKCAPQKHTPPDVEREPPDQSSIQVPVLLLEYFKHVNPGRLEFIEYKFGVNIEIQASSPNMVTVGFTSSPFGNVEEASQSFVRDFQKCSQSLKQDCISLEEHQRAKEVRQELSRCFPKLLIKGQGRTLTLLGSPADISAATEKVSQGLGLRPVKITASGYTTGIEVDSTRFKLLEPELLQEISEIEQKFNTRGKVQEKGQKTCILFVPKDKDLDLSVQSYTGFTDAFQRATWQLRTEVLSLKGLGKERARLHNTKFADNFKKEHPNVHFVTSQESVTLTGLPHHLAQAMQYVSKRMGLAPSSGEKLAMDQETPMEISSSDPHGDQQENAALPAPRGTSSSPAASKGTEDYCVICMDTISNKHVLPKCKHEFCTSCISKAMLIKPVCPVCLTSYGIQKGNQPEGTMSYSTQKGSLPGYEGCGTIVINYEIKDGIQTKEHPNPGKAYHGTRRTAYLPDNTEGRKVLDLLHEAFKHRLTFTIGYSRATGVSDVITWNDIHHKTSKFGGPANFGYPDPDYLKRVKEELKAKGIE.

N-acetylalanine is present on alanine 2. Phosphoserine is present on serine 9. Disordered stretches follow at residues 94-117 (DLRPRLPSLTQPVETPSSRPPSLT), 209-238 (EQKRKGSEQKRKCAPQKHTPPDVEREPPDQ), and 528-562 (QETPMEISSSDPHGDQQENAALPAPRGTSSSPAAS). A compositionally biased stretch (polar residues) spans 101 to 117 (SLTQPVETPSSRPPSLT). Composition is skewed to basic and acidic residues over residues 209-219 (EQKRKGSEQKR) and 227-236 (TPPDVEREPP). At serine 215 the chain carries Phosphoserine. Position 536 is a phosphoserine (serine 536). An RING-type zinc finger spans residues 569 to 608 (CVICMDTISNKHVLPKCKHEFCTSCISKAMLIKPVCPVCL).

Belongs to the Deltex family. As to quaternary structure, homodimer and heterodimer. Can heterodimerize with DTX1, enhancing its ubiquitin ligase activity in vitro. Interacts (via N-terminus) with ADP ribosyltransferase PARP9/BAL1 (via PARP catalytic domain) forming a stable complex; the interaction is required to activate PARP9 but is dispensable for DTX3L catalytic activity. Forms a complex with STAT1 and PARP9 independently of IFNB1 or IFNG-mediated STAT1 'Tyr-701' phosphorylation. Found in a complex with PARP9, STAT1 and H2BC9. Found in a complex with E3 ligase ITCH and ESCRT-0 components HGS and STAM. Interacts (via C-terminus) with ITCH; the interaction is increased upon CXCL12 stimulation and inhibits ITCH catalytic activity; the interaction is direct. Interacts with HGS and STAM; the interaction brings together HGS and STAM and promotes their recruitment to early endosomes. Post-translationally, autoubiquitinated.

The protein resides in the cytoplasm. The protein localises to the nucleus. It localises to the early endosome membrane. It is found in the lysosome membrane. The catalysed reaction is S-ubiquitinyl-[E2 ubiquitin-conjugating enzyme]-L-cysteine + [acceptor protein]-L-lysine = [E2 ubiquitin-conjugating enzyme]-L-cysteine + N(6)-ubiquitinyl-[acceptor protein]-L-lysine.. Its pathway is protein modification; protein ubiquitination. With respect to regulation, binding to PARP9 enhances DTX3L catalytic activity. E3 ubiquitin-protein ligase which, in association with ADP-ribosyltransferase PARP9, plays a role in DNA damage repair and in interferon-mediated antiviral responses. Monoubiquitinates several histones, including histone H2A, H2B, H3 and H4. In response to DNA damage, mediates monoubiquitination of 'Lys-91' of histone H4 (H4K91ub1). The exact role of H4K91ub1 in DNA damage response is still unclear but it may function as a licensing signal for additional histone H4 post-translational modifications such as H4 'Lys-20' methylation (H4K20me). PARP1-dependent PARP9-DTX3L-mediated ubiquitination promotes the rapid and specific recruitment of 53BP1/TP53BP1, UIMC1/RAP80, and BRCA1 to DNA damage sites. By monoubiquitinating histone H2B H2BC9/H2BJ and thereby promoting chromatin remodeling, positively regulates STAT1-dependent interferon-stimulated gene transcription and thus STAT1-mediated control of viral replication. Independently of its catalytic activity, promotes the sorting of chemokine receptor CXCR4 from early endosome to lysosome following CXCL12 stimulation by reducing E3 ligase ITCH activity and thus ITCH-mediated ubiquitination of endosomal sorting complex required for transport ESCRT-0 components HGS and STAM. In addition, required for the recruitment of HGS and STAM to early endosomes. This is E3 ubiquitin-protein ligase DTX3L (Dtx3l) from Mus musculus (Mouse).